The primary structure comprises 260 residues: uncharacterized protein (260 aa).

The Radical SAM core domain maps to A6 to N239.

This is an uncharacterized protein from Sinorhizobium fredii (strain NBRC 101917 / NGR234).